We begin with the raw amino-acid sequence, 352 residues long: Vacuolar protein sorting-associated protein 37C (352 aa).

Position 29 is a phosphoserine (serine 29). The VPS37 C-terminal domain maps to 78 to 167; sequence VERCQEQKAK…RRPRALPELA (90 aa). The interval 162-352 is disordered; sequence ALPELAGDVP…HPPGPAWPRY (191 aa). Composition is skewed to pro residues over residues 173–185, 202–213, and 319–336; these read KRPPPPRPVPQAT, YPLPYSPSPGLP, and PGQPQPPVPPQPPYPPGT.

The protein belongs to the VPS37 family. As to quaternary structure, component of the ESCRT-I complex (endosomal sorting complex required for transport I) which consists of TSG101, VPS28, a VPS37 protein (VPS37A to -D) and MVB12A or MVB12B in a 1:1:1:1 stoichiometry. Interacts with TSG101, VPS28, MVB12A and MVB12B. Component of the ESCRT-I complex (endosomal sorting complex required for transport I) which consists of TSG101, VPS28, a VPS37 protein (VPS37A to -D) and UBAP1 in a 1:1:1:1 stoichiometry. Interacts with HGS and STAM2. Interacts with CEP55. Post-translationally, phosphorylated by TBK1.

Its subcellular location is the late endosome membrane. Functionally, component of the ESCRT-I complex, a regulator of vesicular trafficking process. Required for the sorting of endocytic ubiquitinated cargos into multivesicular bodies. May be involved in cell growth and differentiation. The protein is Vacuolar protein sorting-associated protein 37C (Vps37c) of Mus musculus (Mouse).